The sequence spans 89 residues: Heat shock protein 30A (89 aa).

2 stretches are compositionally biased toward basic and acidic residues: residues 1–11 (MRNNVERRMQR) and 19–39 (LSKD…RESE). The segment at 1 to 55 (MRNNVERRMQRVNEACRLLSKDTEMRRITDQNRQSRESEGTSPNSGKDGKDHFEL) is disordered. The sHSP domain occupies 35–89 (SRESEGTSPNSGKDGKDHFELTLNVRDFSPHELTVKTQGRRVIVTGKHERKSDTE).

It belongs to the small heat shock protein (HSP20) family.

The polypeptide is Heat shock protein 30A (hsp30a) (Xenopus laevis (African clawed frog)).